A 192-amino-acid polypeptide reads, in one-letter code: Casparian strip membrane protein 1 (192 aa).

Residues 1-30 (MSTTVDVPESSNVAKGKAIAVARPGGWKKG) lie on the Cytoplasmic side of the membrane. A helical membrane pass occupies residues 31-51 (LAIMDFILRLGGIAASLGAAA). Residues 52 to 80 (TMGTSDQTLPFFTQFFQFEASYDSFTTFQ) are Extracellular-facing. The helical transmembrane segment at 81 to 101 (FFVITMALVAGYLVLSLPFSV) threads the bilayer. Residues 102-113 (VAIIRPHAPGPR) are Cytoplasmic-facing. The chain crosses the membrane as a helical span at residues 114–134 (LFLIILDTVFLTLATASGASA). Topologically, residues 135–166 (AAIVYLAHNGNQDSNWLAICNQFGDFCAQTSG) are extracellular. The chain crosses the membrane as a helical span at residues 167 to 187 (AVVASFVAVVILVLLVIMSAL). Topologically, residues 188-192 (ALRRH) are cytoplasmic.

Belongs to the Casparian strip membrane proteins (CASP) family. Homodimer and heterodimers.

It localises to the cell membrane. In terms of biological role, regulates membrane-cell wall junctions and localized cell wall deposition. Required for establishment of the Casparian strip membrane domain (CSD) and the subsequent formation of Casparian strips, a cell wall modification of the root endodermis that determines an apoplastic barrier between the intraorganismal apoplasm and the extraorganismal apoplasm and prevents lateral diffusion. This is Casparian strip membrane protein 1 from Vigna unguiculata (Cowpea).